The primary structure comprises 249 residues: Isoprenyl transferase (249 aa).

Residue Asp-25 is part of the active site. Mg(2+) is bound at residue Asp-25. Substrate is bound by residues 26 to 29, Trp-30, Arg-38, His-42, and 70 to 72; these read GNGR and STE. Asn-73 functions as the Proton acceptor in the catalytic mechanism. Substrate-binding positions include Trp-74, Arg-76, Arg-197, and 203-205; that span reads RLS. Glu-216 is a Mg(2+) binding site.

It belongs to the UPP synthase family. As to quaternary structure, homodimer. Requires Mg(2+) as cofactor.

In terms of biological role, catalyzes the condensation of isopentenyl diphosphate (IPP) with allylic pyrophosphates generating different type of terpenoids. This is Isoprenyl transferase from Streptococcus pyogenes serotype M3 (strain ATCC BAA-595 / MGAS315).